The chain runs to 147 residues: Large-conductance mechanosensitive channel (147 aa).

Helical transmembrane passes span 14–34 and 85–105; these read VVDM…VKSL and FGLF…LFMI.

It belongs to the MscL family. As to quaternary structure, homopentamer.

The protein localises to the cell inner membrane. In terms of biological role, channel that opens in response to stretch forces in the membrane lipid bilayer. May participate in the regulation of osmotic pressure changes within the cell. This is Large-conductance mechanosensitive channel from Tolumonas auensis (strain DSM 9187 / NBRC 110442 / TA 4).